The sequence spans 127 residues: UPF0102 protein Cpha266_0037 (127 aa).

The protein belongs to the UPF0102 family.

The sequence is that of UPF0102 protein Cpha266_0037 from Chlorobium phaeobacteroides (strain DSM 266 / SMG 266 / 2430).